A 280-amino-acid polypeptide reads, in one-letter code: Polyamine aminopropyltransferase 1 (280 aa).

A PABS domain is found at 3–237 (DIVFIERDPY…YWWTFSIASK (235 aa)). Residue Gln33 coordinates S-methyl-5'-thioadenosine. His64 and Asp88 together coordinate spermidine. Residues Asp108 and 139–140 (DG) each bind S-methyl-5'-thioadenosine. The active-site Proton acceptor is the Asp157. 157-160 (DSTD) lines the spermidine pocket.

This sequence belongs to the spermidine/spermine synthase family. As to quaternary structure, homodimer or homotetramer.

It localises to the cytoplasm. It carries out the reaction S-adenosyl 3-(methylsulfanyl)propylamine + putrescine = S-methyl-5'-thioadenosine + spermidine + H(+). The protein operates within amine and polyamine biosynthesis; spermidine biosynthesis; spermidine from putrescine: step 1/1. Its function is as follows. Catalyzes the irreversible transfer of a propylamine group from the amino donor S-adenosylmethioninamine (decarboxy-AdoMet) to putrescine (1,4-diaminobutane) to yield spermidine. This Aquifex aeolicus (strain VF5) protein is Polyamine aminopropyltransferase 1.